Consider the following 473-residue polypeptide: Photosystem II CP43 reaction center protein (473 aa).

Residues 1 to 14 (MKILYSLRRFYHVE) constitute a propeptide that is removed on maturation. Thr-15 carries the N-acetylthreonine modification. Phosphothreonine is present on Thr-15. Transmembrane regions (helical) follow at residues 69–93 (LFEVAHFVPEKPMYEQGLILLPHLA), 134–155 (LLGPETLEESFPFFGYVWKDRN), 178–200 (KALYFGGVYDTWAPGGGDVRKIT), 255–275 (KPFAWARRAFVWSGEAYLSYS), and 291–312 (WFNNTAYPSEFYGPTGPEASQA). Glu-367 serves as a coordination point for [CaMn4O5] cluster. Residues 447 to 471 (RARAAAAGFEKGIDRDLEPVLYMNP) traverse the membrane as a helical segment.

This sequence belongs to the PsbB/PsbC family. PsbC subfamily. As to quaternary structure, PSII is composed of 1 copy each of membrane proteins PsbA, PsbB, PsbC, PsbD, PsbE, PsbF, PsbH, PsbI, PsbJ, PsbK, PsbL, PsbM, PsbT, PsbX, PsbY, PsbZ, Psb30/Ycf12, at least 3 peripheral proteins of the oxygen-evolving complex and a large number of cofactors. It forms dimeric complexes. Binds multiple chlorophylls and provides some of the ligands for the Ca-4Mn-5O cluster of the oxygen-evolving complex. It may also provide a ligand for a Cl- that is required for oxygen evolution. PSII binds additional chlorophylls, carotenoids and specific lipids. serves as cofactor.

It is found in the plastid. The protein resides in the chloroplast thylakoid membrane. One of the components of the core complex of photosystem II (PSII). It binds chlorophyll and helps catalyze the primary light-induced photochemical processes of PSII. PSII is a light-driven water:plastoquinone oxidoreductase, using light energy to abstract electrons from H(2)O, generating O(2) and a proton gradient subsequently used for ATP formation. This Hordeum vulgare (Barley) protein is Photosystem II CP43 reaction center protein.